We begin with the raw amino-acid sequence, 112 residues long: Large ribosomal subunit protein uL22 (112 aa).

This sequence belongs to the universal ribosomal protein uL22 family. Part of the 50S ribosomal subunit.

This protein binds specifically to 23S rRNA; its binding is stimulated by other ribosomal proteins, e.g. L4, L17, and L20. It is important during the early stages of 50S assembly. It makes multiple contacts with different domains of the 23S rRNA in the assembled 50S subunit and ribosome. Functionally, the globular domain of the protein is located near the polypeptide exit tunnel on the outside of the subunit, while an extended beta-hairpin is found that lines the wall of the exit tunnel in the center of the 70S ribosome. This chain is Large ribosomal subunit protein uL22, found in Finegoldia magna (strain ATCC 29328 / DSM 20472 / WAL 2508) (Peptostreptococcus magnus).